The chain runs to 119 residues: Large ribosomal subunit protein bL20 (119 aa).

This sequence belongs to the bacterial ribosomal protein bL20 family.

Binds directly to 23S ribosomal RNA and is necessary for the in vitro assembly process of the 50S ribosomal subunit. It is not involved in the protein synthesizing functions of that subunit. The polypeptide is Large ribosomal subunit protein bL20 (Streptococcus agalactiae serotype Ia (strain ATCC 27591 / A909 / CDC SS700)).